Consider the following 465-residue polypeptide: Cysteine--tRNA ligase (465 aa).

Residue C30 participates in Zn(2+) binding. A 'HIGH' region motif is present at residues 32–42; sequence MTVYDYCHVGH. Zn(2+) contacts are provided by C214, H239, and E243. Positions 271 to 275 match the 'KMSKS' region motif; sequence KMSKS. K274 contacts ATP.

Belongs to the class-I aminoacyl-tRNA synthetase family. In terms of assembly, monomer. Requires Zn(2+) as cofactor.

It localises to the cytoplasm. The enzyme catalyses tRNA(Cys) + L-cysteine + ATP = L-cysteinyl-tRNA(Cys) + AMP + diphosphate. In Paraburkholderia xenovorans (strain LB400), this protein is Cysteine--tRNA ligase.